Consider the following 150-residue polypeptide: Probable NADH dehydrogenase [ubiquinone] 1 alpha subcomplex subunit 5 (150 aa).

It belongs to the complex I NDUFA5 subunit family. In terms of assembly, complex I is composed of 45 different subunits.

It localises to the mitochondrion inner membrane. Its function is as follows. Accessory subunit of the mitochondrial membrane respiratory chain NADH dehydrogenase (Complex I), that is believed not to be involved in catalysis. Complex I functions in the transfer of electrons from NADH to the respiratory chain. The immediate electron acceptor for the enzyme is believed to be ubiquinone. This Caenorhabditis elegans protein is Probable NADH dehydrogenase [ubiquinone] 1 alpha subcomplex subunit 5.